Reading from the N-terminus, the 819-residue chain is Protein kinase C-binding protein NELL2 (819 aa).

The signal sequence occupies residues 1–24 (MHAMESRVLLRTFCVILGLEAVWG). Asn-56, Asn-228, Asn-296, and Asn-301 each carry an N-linked (GlcNAc...) asparagine glycan. Residues 58-231 (TKAFLFQDSP…AQCPDLNRTC (174 aa)) form the Laminin G-like domain. In terms of domain architecture, VWFC 1 spans 275 to 334 (RTCTMKGTTYREFESWTDGCKNCTCLNGTIQCETLVCPAPDCPAKSAPAYVDGKCCKECK). The 43-residue stretch at 400–442 (GYDFCSEKHTCMENSVCRNLNDRAVCSCRDGFRALREDNAYCE) folds into the EGF-like 1 domain. Cystine bridges form between Cys-404–Cys-416, Cys-410–Cys-425, and Cys-427–Cys-441. Ca(2+) is bound by residues Asp-443, Ile-444, and Glu-446. The 42-residue stretch at 443-484 (DIDECAEGRHYCRENTMCVNTPGSFLCICQTGYIRIDDYSCT) folds into the EGF-like 2; calcium-binding domain. Cystine bridges form between Cys-447–Cys-460, Cys-454–Cys-469, Cys-471–Cys-483, Cys-489–Cys-502, Cys-496–Cys-511, Cys-513–Cys-524, Cys-528–Cys-538, Cys-532–Cys-544, and Cys-546–Cys-555. 3 residues coordinate Ca(2+): Asn-462, Thr-463, and Ser-466. Residues 485-525 (EHDECLTNQHNCDENALCFNTVGGHNCVCKPGYTGNGTTCK) enclose the EGF-like 3; calcium-binding domain. An N-linked (GlcNAc...) asparagine glycan is attached at Asn-520. An EGF-like 4 domain is found at 526-556 (AFCKDGCRNGGACIAANVCACPQGFTGPSCE). The O-linked (GlcNAc...) threonine glycan is linked to Thr-551. The Ca(2+) site is built by Asp-558, Ile-559, and Glu-561. The 47-residue stretch at 558-604 (DIDECSEGFVQCDSRANCINLPGWYHCECRDGYHDNGMFAPGGESCE) folds into the EGF-like 5; calcium-binding domain. Disulfide bonds link Cys-562–Cys-575, Cys-569–Cys-584, and Cys-586–Cys-603. Ca(2+) is bound by residues Asn-577, Leu-578, and Trp-581. Ca(2+) contacts are provided by Asp-605, Ile-606, and Glu-608. Residues 605–640 (DIDECGTGRHSCANDTICFNLDGGYDCRCPHGKNCT) enclose the EGF-like 6; calcium-binding domain. Cystine bridges form between Cys-609–Cys-622, Cys-616–Cys-631, and Cys-633–Cys-639. The N-linked (GlcNAc...) asparagine glycan is linked to Asn-618. Ca(2+)-binding residues include Asn-624, Leu-625, and Gly-628. Asn-638 carries N-linked (GlcNAc...) asparagine glycosylation. 2 consecutive VWFC domains span residues 641 to 696 (GDCV…PECD) and 701 to 759 (SQCL…PRCV).

Homotrimer. Binds to PRKCB. Interacts with NICOL1; this interaction triggers epididymal differentiation. As to quaternary structure, binds to PRKCB. Widely expressed. Expressed in cortical astrocytes but not in neuron. In terms of tissue distribution, widely expressed in brain. High expression is observed in telencephalic and diencephalic glutamatergic neurons, while no expression is found in GABAergic and GNRH neurons.

The protein localises to the secreted. Its subcellular location is the cytoplasm. Its function is as follows. Plays multiple roles In neural tissues, regulates neuronal proliferation, survival, differentiation, polarization, as well as axon guidance and synaptic functions. Plays an important role in axon development during neuronal differentiation through the MAPK intracellular signaling pathway. Via binding to its receptor ROBO3, plays a role in axon guidance, functioning as a repulsive axon guidance cue that contributes to commissural axon guidance to the midline. Required for neuron survival through the modulation of MAPK signaling pathways too. Involved in the regulation of hypothalamic GNRH secretion and the control of puberty. In terms of biological role, epididymal-secreted protein that signals through a ROS1-pathway to regulate the epididymal initial segment (IS) maturation, sperm maturation and male fertility. Acts as an endogenous inhibitor of PRKCB in glia. This Rattus norvegicus (Rat) protein is Protein kinase C-binding protein NELL2 (Nell2).